The primary structure comprises 311 residues: L-lactate dehydrogenase 2 (311 aa).

NAD(+) contacts are provided by Val-14, Asp-35, and Arg-40. Arg-90 contacts substrate. Residues Ser-103, 120 to 122 (ATN), and Thr-145 each bind NAD(+). A substrate-binding site is contributed by 122 to 125 (NPCD). 150–153 (DTTR) is a substrate binding site. His-177 functions as the Proton acceptor in the catalytic mechanism. A substrate-binding site is contributed by Thr-230.

This sequence belongs to the LDH/MDH superfamily. LDH family. As to quaternary structure, homotetramer.

The protein localises to the cytoplasm. The enzyme catalyses (S)-lactate + NAD(+) = pyruvate + NADH + H(+). The protein operates within fermentation; pyruvate fermentation to lactate; (S)-lactate from pyruvate: step 1/1. Its function is as follows. Catalyzes the conversion of lactate to pyruvate. The polypeptide is L-lactate dehydrogenase 2 (Listeria monocytogenes serotype 4b (strain F2365)).